The chain runs to 190 residues: MREITRTTKETNIKASLELYGSGVAKIETGIGFFDHMLESLAKHALWDLEISCEGDLQVDAHHSVEDCGIVLGLLLRESLYPAQGIERFGNASVVMDESCVECDLDVSNRPFLVFDMTIEGAVGEFDAELAEEFFRALAFNAGLSLHIVQKRGKNRHHLIEAAFKALAVAMRRACTQNPRIGTPSTKGLL.

Belongs to the imidazoleglycerol-phosphate dehydratase family.

It is found in the cytoplasm. It catalyses the reaction D-erythro-1-(imidazol-4-yl)glycerol 3-phosphate = 3-(imidazol-4-yl)-2-oxopropyl phosphate + H2O. The protein operates within amino-acid biosynthesis; L-histidine biosynthesis; L-histidine from 5-phospho-alpha-D-ribose 1-diphosphate: step 6/9. In Wolinella succinogenes (strain ATCC 29543 / DSM 1740 / CCUG 13145 / JCM 31913 / LMG 7466 / NCTC 11488 / FDC 602W) (Vibrio succinogenes), this protein is Imidazoleglycerol-phosphate dehydratase.